A 2570-amino-acid chain; its full sequence is Highly reducing polyketide synthase tstA (2570 aa).

The region spanning 16–443 (AMPIAVVGIG…GANAHVVLEN (428 aa)) is the Ketosynthase family 3 (KS3) domain. Catalysis depends on for beta-ketoacyl synthase activity residues cysteine 191, histidine 326, and histidine 366. The segment at 458 to 478 (HTRKSATESSGTSTPSNPGPH) is disordered. The span at 464–478 (TESSGTSTPSNPGPH) shows a compositional bias: low complexity. The Malonyl-CoA:ACP transacylase (MAT) domain maps to 567-898 (FVFTGQGAQW…YSALVRNKNA (332 aa)). An N-terminal hotdog fold region spans residues 965-1103 (TDLLGVLERN…GLVSVVAPQK (139 aa)). One can recognise a PKS/mFAS DH domain in the interval 965-1293 (TDLLGVLERN…CATLAREGAD (329 aa)). The active-site Proton acceptor; for dehydratase activity is the histidine 997. A C-terminal hotdog fold region spans residues 1133–1293 (RRNINVPQFY…CATLAREGAD (161 aa)). Residue aspartate 1198 is the Proton donor; for dehydratase activity of the active site. The methyltransferase (CMeT) domain stretch occupies residues 1343-1645 (LERAAYYMLK…IATSINSNNY (303 aa)). The region spanning 1866–2178 (GLLDSIFWTD…TGGHMGKLVG (313 aa)) is the Enoyl reductase (ER) domain. Residues 2202–2379 (ASYVLIGGLG…ATTIDLGAIS (178 aa)) form the Ketoreductase (KR) domain. The region spanning 2482 to 2559 (DASELILGAL…HLATKIAQRS (78 aa)) is the Carrier domain. Residue serine 2519 is modified to O-(pantetheine 4'-phosphoryl)serine.

It depends on pantetheine 4'-phosphate as a cofactor.

The protein operates within secondary metabolite biosynthesis. Its function is as follows. Highly reducing polyketide synthase; part of the gene cluster that mediates the biosynthesis of the antihypercholesterolemic agents phomoidrides which are dimeric anhydrides. The pathway begins with the highly reducing polyketide synthase tstA that catalyzes the formation of a C12-fatty acyl-ACP, starting from one acetate and 5 malonate units. The hydrolase tstM is involved in the release of the C12-fatty acyl chain from tstA. The alkylcitrate synthase (ACS) tstJ and the alkylcitrate dehydratase (ACDH) tstI then give rise to decarboxylated monomeric anhydrides by coupling the C12-fatty acyl chain with oxalacetic acid. The cyclase tstC is responsible for the dimerization of the monomeric anhydrides which leads to the production of prephomoidride that contains the characteristic bicyclo[4.3.1]deca-1,6-diene system of phomoidrides. Iterative oxidation catalyzed by the alpha-ketoglutarate-dependent dioxygenase tstK produced then phomoidride A. Finally, the methyltransferase tstE converts phomoidride A to phomoidride B via an acetalization reaction. The phosphatidylethanolamine-binding protein tstB and tstN are not essential for dimerization and their functions have still to be determined. This chain is Highly reducing polyketide synthase tstA, found in Talaromyces stipitatus (strain ATCC 10500 / CBS 375.48 / QM 6759 / NRRL 1006) (Penicillium stipitatum).